Reading from the N-terminus, the 508-residue chain is Polyamine oxidase FMS1 (508 aa).

The protein belongs to the flavin monoamine oxidase family. FAD is required as a cofactor.

It carries out the reaction spermine + O2 + H2O = 3-aminopropanal + spermidine + H2O2. The enzyme catalyses spermidine + O2 + H2O = 3-aminopropanal + putrescine + H2O2. The catalysed reaction is N(1)-acetylspermine + O2 + H2O = 3-acetamidopropanal + spermidine + H2O2. It catalyses the reaction N(1)-acetylspermidine + O2 + H2O = 3-acetamidopropanal + putrescine + H2O2. It carries out the reaction N(8)-acetylspermidine + O2 + H2O = 4-acetamidobutanal + propane-1,3-diamine + H2O2. In terms of biological role, involved in the production of beta-alanine, a precursor of pantothenic acid. Multicopy suppressor of fenpropimorph resistance. The protein is Polyamine oxidase FMS1 (FMS1) of Saccharomyces cerevisiae (strain ATCC 204508 / S288c) (Baker's yeast).